We begin with the raw amino-acid sequence, 201 residues long: Proteasome subunit beta type-2 (201 aa).

M1 carries the N-acetylmethionine modification.

It belongs to the peptidase T1B family. As to quaternary structure, the 26S proteasome consists of a 20S proteasome core and two 19S regulatory subunits. The 20S proteasome core is a barrel-shaped complex made of 28 subunits that are arranged in four stacked rings. The two outer rings are each formed by seven alpha subunits, and the two inner rings are formed by seven beta subunits. The proteolytic activity is exerted by three beta-subunits PSMB5, PSMB6 and PSMB7.

It is found in the cytoplasm. Its subcellular location is the nucleus. Functionally, non-catalytic component of the 20S core proteasome complex involved in the proteolytic degradation of most intracellular proteins. This complex plays numerous essential roles within the cell by associating with different regulatory particles. Associated with two 19S regulatory particles, forms the 26S proteasome and thus participates in the ATP-dependent degradation of ubiquitinated proteins. The 26S proteasome plays a key role in the maintenance of protein homeostasis by removing misfolded or damaged proteins that could impair cellular functions, and by removing proteins whose functions are no longer required. Associated with the PA200 or PA28, the 20S proteasome mediates ubiquitin-independent protein degradation. This type of proteolysis is required in several pathways including spermatogenesis (20S-PA200 complex) or generation of a subset of MHC class I-presented antigenic peptides (20S-PA28 complex). This Bos taurus (Bovine) protein is Proteasome subunit beta type-2 (PSMB2).